Consider the following 94-residue polypeptide: Small ribosomal subunit protein uS19 (94 aa).

The protein belongs to the universal ribosomal protein uS19 family.

Protein S19 forms a complex with S13 that binds strongly to the 16S ribosomal RNA. The chain is Small ribosomal subunit protein uS19 from Moorella thermoacetica (strain ATCC 39073 / JCM 9320).